The primary structure comprises 301 residues: Homoserine O-acetyltransferase (301 aa).

Cys-142 acts as the Acyl-thioester intermediate in catalysis. Residues Lys-163 and Ser-192 each contribute to the substrate site. His-235 (proton acceptor) is an active-site residue. The active site involves Glu-237. Arg-249 contacts substrate.

The protein belongs to the MetA family.

Its subcellular location is the cytoplasm. It carries out the reaction L-homoserine + acetyl-CoA = O-acetyl-L-homoserine + CoA. It functions in the pathway amino-acid biosynthesis; L-methionine biosynthesis via de novo pathway; O-acetyl-L-homoserine from L-homoserine: step 1/1. Functionally, transfers an acetyl group from acetyl-CoA to L-homoserine, forming acetyl-L-homoserine. This chain is Homoserine O-acetyltransferase, found in Bacillus cereus (strain B4264).